A 569-amino-acid polypeptide reads, in one-letter code: Urease subunit alpha (569 aa).

Residues 131–569 (GGIDTHIHFI…LPLAQRYLLL (439 aa)) enclose the Urease domain. 3 residues coordinate Ni(2+): His-136, His-138, and Lys-219. N6-carboxylysine is present on Lys-219. A substrate-binding site is contributed by His-221. Positions 248 and 274 each coordinate Ni(2+). Residue His-322 is the Proton donor of the active site. Asp-362 serves as a coordination point for Ni(2+).

This sequence belongs to the metallo-dependent hydrolases superfamily. Urease alpha subunit family. Heterotrimer of UreA (gamma), UreB (beta) and UreC (alpha) subunits. Three heterotrimers associate to form the active enzyme. Requires Ni cation as cofactor. In terms of processing, carboxylation allows a single lysine to coordinate two nickel ions.

It is found in the cytoplasm. The catalysed reaction is urea + 2 H2O + H(+) = hydrogencarbonate + 2 NH4(+). It functions in the pathway nitrogen metabolism; urea degradation; CO(2) and NH(3) from urea (urease route): step 1/1. The chain is Urease subunit alpha from Synechococcus sp. (strain WH7805).